We begin with the raw amino-acid sequence, 413 residues long: Glucose-1-phosphate adenylyltransferase (413 aa).

Residues Y102, G167, 182–183, and S200 contribute to the alpha-D-glucose 1-phosphate site; that span reads EK.

It belongs to the bacterial/plant glucose-1-phosphate adenylyltransferase family. In terms of assembly, homotetramer.

The catalysed reaction is alpha-D-glucose 1-phosphate + ATP + H(+) = ADP-alpha-D-glucose + diphosphate. It functions in the pathway glycan biosynthesis; glycogen biosynthesis. In terms of biological role, involved in the biosynthesis of ADP-glucose, a building block required for the elongation reactions to produce glycogen. Catalyzes the reaction between ATP and alpha-D-glucose 1-phosphate (G1P) to produce pyrophosphate and ADP-Glc. This chain is Glucose-1-phosphate adenylyltransferase, found in Deinococcus geothermalis (strain DSM 11300 / CIP 105573 / AG-3a).